A 230-amino-acid polypeptide reads, in one-letter code: Ribonuclease 3 (230 aa).

Residues 10–133 (DPRLQSRIGY…IIGAIYVDSN (124 aa)) enclose the RNase III domain. Residue Glu46 coordinates Mg(2+). Asp50 is an active-site residue. Residues Asp119 and Glu122 each coordinate Mg(2+). Residue Glu122 is part of the active site. A DRBM domain is found at 161 to 230 (DPKSRLQEYL…AAEILKLLEQ (70 aa)).

The protein belongs to the ribonuclease III family. Homodimer. The cofactor is Mg(2+).

The protein resides in the cytoplasm. The enzyme catalyses Endonucleolytic cleavage to 5'-phosphomonoester.. Functionally, digests double-stranded RNA. Involved in the processing of primary rRNA transcript to yield the immediate precursors to the large and small rRNAs (23S and 16S). Processes some mRNAs, and tRNAs when they are encoded in the rRNA operon. Processes pre-crRNA and tracrRNA of type II CRISPR loci if present in the organism. The chain is Ribonuclease 3 from Acinetobacter baylyi (strain ATCC 33305 / BD413 / ADP1).